We begin with the raw amino-acid sequence, 129 residues long: Small ribosomal subunit protein uS11 (129 aa).

It belongs to the universal ribosomal protein uS11 family. Part of the 30S ribosomal subunit. Interacts with proteins S7 and S18. Binds to IF-3.

In terms of biological role, located on the platform of the 30S subunit, it bridges several disparate RNA helices of the 16S rRNA. Forms part of the Shine-Dalgarno cleft in the 70S ribosome. The sequence is that of Small ribosomal subunit protein uS11 from Hahella chejuensis (strain KCTC 2396).